The sequence spans 708 residues: MRVSVSLVLGVGLGCSSPALWAETESPAELEVLTVTAEAERAEGPVQGYRANRSASATRTDTRIEDIPQAISVVPRQVLDDLDSARIERALDFAGGVSRQNNFGGLTMFEYNVRGFTTSEFYRDGFSANRGYMNAPDSATIERVEILKGPASSLYGRGDPGGTVNLVTKKPQAERFARLHASAGSWDRYRSTLDLNTPLDEEGDLLYRMNLAVEDSKGFRDYADGQRLLVAPSFSWQLDPDTSLLVEAEVVRNRQVFDRGTVAPHNHLGSLPRSRFFGEPDDGKIDNNNETLQATLRHHLNEQWSLRLASHYKHGHLDGYASENSSLAADGYTLRREYRYRDFEWHDSITQLDLLGDLHTGSIRHQLLMGLEYERYHNDELILRSIPSRNPYAIDIRRPVYGQPKPPFGRDDRNHEEVDAMALNLQDQIEFNEKWRGLLGVRFDRYRQDMNATRLNNGRFRDTSSQQTQRAATPRIGVLYQATPEVGLFANASKSFKPNGGTDMAGKAFDPEEGRGYEAGVKLDLLDGRLGMTLAAFHLKKKNVLTADPSNPGYQQTAGEARSQGFDLQFSGQLTEQLRLIGAYAYIDAEVTKDENIARGSRLLNVPKHSGSLMGVYEFREGWLHGADAGAAVNYVGERAGDSSDSGFELPAYTTVDLLAHYPLASNATLGVNVNNLFDRRYYERSYNNVWVAPGEPRNLTMSLTLNY.

Positions 1–21 are cleaved as a signal peptide; the sequence is MRVSVSLVLGVGLGCSSPALW. The 107-residue stretch at 63–169 folds into the TBDR plug domain; that stretch reads RIEDIPQAIS…PGGTVNLVTK (107 aa). Positions 174–708 constitute a TBDR beta-barrel domain; sequence ERFARLHASA…NLTMSLTLNY (535 aa).

It belongs to the TonB-dependent receptor family.

The protein resides in the cell outer membrane. Its function is as follows. Transports the metallophore pseudopaline, which is involved in the acquisition of nickel and zinc, and thus enables bacterial growth inside the host, where metal access is limited. Is probably involved in the import of pseudopaline-metal complexes. The protein is Metal-pseudopaline receptor CntO of Pseudomonas aeruginosa (strain UCBPP-PA14).